We begin with the raw amino-acid sequence, 249 residues long: Exosome complex component Rrp4 (249 aa).

The S1 motif domain maps to 73 to 144 (NDIVIGLVED…RSIDPVLSVK (72 aa)). The KH domain maps to 154–211 (GIVIDIMPVKVPRVIGKNKSMYETLTSKSGCSIFVANNGRIWATCPSRFSEEILIEAI).

The protein belongs to the RRP4 family. As to quaternary structure, component of the archaeal exosome complex. Forms a trimer of Rrp4 and/or Csl4 subunits. The trimer associates with a hexameric ring-like arrangement composed of 3 Rrp41-Rrp42 heterodimers.

Its subcellular location is the cytoplasm. Non-catalytic component of the exosome, which is a complex involved in RNA degradation. Increases the RNA binding and the efficiency of RNA degradation. Confers strong poly(A) specificity to the exosome. This chain is Exosome complex component Rrp4, found in Saccharolobus solfataricus (strain ATCC 35092 / DSM 1617 / JCM 11322 / P2) (Sulfolobus solfataricus).